Reading from the N-terminus, the 465-residue chain is Kynureninase (465 aa).

Pyridoxal 5'-phosphate is bound by residues Leu-133, Thr-134, 161 to 164, Ser-217, Asp-246, His-249, and Tyr-271; that span reads FPSD. N6-(pyridoxal phosphate)lysine is present on Lys-272. Trp-302 and Asn-330 together coordinate pyridoxal 5'-phosphate.

This sequence belongs to the kynureninase family. As to quaternary structure, homodimer. Pyridoxal 5'-phosphate serves as cofactor.

Its subcellular location is the cytoplasm. It carries out the reaction L-kynurenine + H2O = anthranilate + L-alanine + H(+). It catalyses the reaction 3-hydroxy-L-kynurenine + H2O = 3-hydroxyanthranilate + L-alanine + H(+). It participates in amino-acid degradation; L-kynurenine degradation; L-alanine and anthranilate from L-kynurenine: step 1/1. It functions in the pathway cofactor biosynthesis; NAD(+) biosynthesis; quinolinate from L-kynurenine: step 2/3. Its function is as follows. Catalyzes the cleavage of L-kynurenine (L-Kyn) and L-3-hydroxykynurenine (L-3OHKyn) into anthranilic acid (AA) and 3-hydroxyanthranilic acid (3-OHAA), respectively. This is Kynureninase from Nematostella vectensis (Starlet sea anemone).